A 340-amino-acid polypeptide reads, in one-letter code: MVKQITDKLGRPIRDLRLSVTDRCNFRCDYCMPKEIFGDDFVFLPKDELLSFSEMERIARVYTHLGVKKIRITGGEPLMRRDLYKLIAALNEIEGVEDIGLTTNGLLLKKHGQKLYDAGLRRINVSLDAIDNELFQSINNRNIKADTILEQIDYAVSIGFKVKINVVVQKGVNDDQIIPMVQYFKDKNIQVRFIEFMDVGNDNGWDFSKVVSKDEMLSMIQEEFDIEAVEPKYYGEVAKYYRHKDNGAQFGLITSVSQSFCSTCTRARLSSDGKFYGCLFSTVDGFNVKEFMRSGVSDDELQAKFEELWNIRDDRYSDERTEQTVAIRKRKKINMNYIGG.

The region spanning 8-227 (KLGRPIRDLR…SMIQEEFDIE (220 aa)) is the Radical SAM core domain. A GTP-binding site is contributed by R17. [4Fe-4S] cluster is bound by residues C24 and C28. Y30 contacts S-adenosyl-L-methionine. C31 is a binding site for [4Fe-4S] cluster. R71 provides a ligand contact to GTP. Residue G75 participates in S-adenosyl-L-methionine binding. T102 serves as a coordination point for GTP. Position 126 (S126) interacts with S-adenosyl-L-methionine. Residue K163 coordinates GTP. M197 lines the S-adenosyl-L-methionine pocket. 2 residues coordinate [4Fe-4S] cluster: C261 and C264. 266–268 (RAR) serves as a coordination point for GTP. Residue C278 participates in [4Fe-4S] cluster binding.

This sequence belongs to the radical SAM superfamily. MoaA family. Monomer and homodimer. [4Fe-4S] cluster is required as a cofactor.

The catalysed reaction is GTP + AH2 + S-adenosyl-L-methionine = (8S)-3',8-cyclo-7,8-dihydroguanosine 5'-triphosphate + 5'-deoxyadenosine + L-methionine + A + H(+). Its pathway is cofactor biosynthesis; molybdopterin biosynthesis. Catalyzes the cyclization of GTP to (8S)-3',8-cyclo-7,8-dihydroguanosine 5'-triphosphate. This chain is GTP 3',8-cyclase, found in Staphylococcus carnosus (strain TM300).